The chain runs to 98 residues: DNA-binding protein Fis (98 aa).

The H-T-H motif DNA-binding region spans 74 to 93; that stretch reads QTRAATMLGINRGTLRKKLK.

Belongs to the transcriptional regulatory Fis family. In terms of assembly, homodimer.

Its function is as follows. Activates ribosomal RNA transcription. Plays a direct role in upstream activation of rRNA promoters. This Haemophilus ducreyi (strain 35000HP / ATCC 700724) protein is DNA-binding protein Fis.